Consider the following 386-residue polypeptide: 23S rRNA (uracil(747)-C(5))-methyltransferase RlmC (386 aa).

Residues Cys7, Cys15, Cys18, and Cys94 each coordinate [4Fe-4S] cluster. S-adenosyl-L-methionine is bound by residues Gln219, Phe248, Glu269, and Asn316. Cys343 functions as the Nucleophile in the catalytic mechanism.

This sequence belongs to the class I-like SAM-binding methyltransferase superfamily. RNA M5U methyltransferase family. RlmC subfamily.

It carries out the reaction uridine(747) in 23S rRNA + S-adenosyl-L-methionine = 5-methyluridine(747) in 23S rRNA + S-adenosyl-L-homocysteine + H(+). Catalyzes the formation of 5-methyl-uridine at position 747 (m5U747) in 23S rRNA. In Shewanella oneidensis (strain ATCC 700550 / JCM 31522 / CIP 106686 / LMG 19005 / NCIMB 14063 / MR-1), this protein is 23S rRNA (uracil(747)-C(5))-methyltransferase RlmC.